Consider the following 61-residue polypeptide: Large ribosomal subunit protein bL32c (61 aa).

Residues Ser-37–Lys-61 are disordered.

It belongs to the bacterial ribosomal protein bL32 family.

Its subcellular location is the plastid. The protein resides in the chloroplast. This is Large ribosomal subunit protein bL32c from Agrostis stolonifera (Creeping bentgrass).